Consider the following 198-residue polypeptide: Dephospho-CoA kinase (198 aa).

The DPCK domain occupies 3-198; it reads LIGLTGGIAS…VDALWAGLRG (196 aa). An ATP-binding site is contributed by 11–16; sequence ASGKST.

It belongs to the CoaE family.

It localises to the cytoplasm. It catalyses the reaction 3'-dephospho-CoA + ATP = ADP + CoA + H(+). It participates in cofactor biosynthesis; coenzyme A biosynthesis; CoA from (R)-pantothenate: step 5/5. Functionally, catalyzes the phosphorylation of the 3'-hydroxyl group of dephosphocoenzyme A to form coenzyme A. The sequence is that of Dephospho-CoA kinase from Leifsonia xyli subsp. xyli (strain CTCB07).